Here is a 375-residue protein sequence, read N- to C-terminus: Probable UDP-N-acetylglucosamine 2-epimerase (375 aa).

It belongs to the UDP-N-acetylglucosamine 2-epimerase family.

Its subcellular location is the cytoplasm. It carries out the reaction UDP-N-acetyl-alpha-D-glucosamine = UDP-N-acetyl-alpha-D-mannosamine. The protein operates within glycan metabolism; exopolysaccharide EPS I biosynthesis. Its function is as follows. May be involved in synthesis of N-acetyltrideoxygalactose, a component of exopolysaccharide EPS I which functions as a virulence factor. This chain is Probable UDP-N-acetylglucosamine 2-epimerase (epsC), found in Ralstonia nicotianae (strain ATCC BAA-1114 / GMI1000) (Ralstonia solanacearum).